We begin with the raw amino-acid sequence, 710 residues long: Cyclomaltodextrin glucanotransferase (710 aa).

An N-terminal signal peptide occupies residues 1-27 (MKKTFKLILVLMLSLTLVFGLTAPIQA). Aspartate 54, asparagine 56, asparagine 59, asparagine 60, glycine 78, and aspartate 80 together coordinate Ca(2+). 128–129 (YW) contacts substrate. Asparagine 167 lines the Ca(2+) pocket. Histidine 168 provides a ligand contact to substrate. Isoleucine 218 contacts Ca(2+). 221–224 (NLFD) contributes to the substrate binding site. Aspartate 227 serves as a coordination point for Ca(2+). Arginine 255 serves as a coordination point for substrate. Residue aspartate 257 is the Nucleophile of the active site. 260–261 (KH) contacts substrate. Residue histidine 261 participates in Ca(2+) binding. Glutamate 285 serves as the catalytic Proton donor. Substrate contacts are provided by histidine 355, aspartate 398, and arginine 402. The IPT/TIG domain occupies 526-603 (PLIGHVGPTM…GATSNTYNNI (78 aa)). The CBM20 domain occupies 605 to 710 (ILTGNQICVR…TGTVIVNWQQ (106 aa)).

Belongs to the glycosyl hydrolase 13 family. Ca(2+) serves as cofactor.

It localises to the secreted. The enzyme catalyses Cyclizes part of a (1-&gt;4)-alpha-D-glucan chain by formation of a (1-&gt;4)-alpha-D-glucosidic bond.. In terms of biological role, degrades starch to alpha-, beta-, and gamma-cyclodextrins, as well as linear sugars. The protein is Cyclomaltodextrin glucanotransferase (amyA) of Thermoanaerobacterium thermosulfurigenes (Clostridium thermosulfurogenes).